A 337-amino-acid polypeptide reads, in one-letter code: Pyridoxal 5'-phosphate synthase subunit PdxS (337 aa).

Asp-65 is a D-ribose 5-phosphate binding site. Lys-122 acts as the Schiff-base intermediate with D-ribose 5-phosphate in catalysis. Gly-194 contributes to the D-ribose 5-phosphate binding site. Residue Lys-206 coordinates D-glyceraldehyde 3-phosphate. Residues Gly-255 and 276-277 (GS) each bind D-ribose 5-phosphate.

This sequence belongs to the PdxS/SNZ family. In the presence of PdxT, forms a dodecamer of heterodimers.

The catalysed reaction is aldehydo-D-ribose 5-phosphate + D-glyceraldehyde 3-phosphate + L-glutamine = pyridoxal 5'-phosphate + L-glutamate + phosphate + 3 H2O + H(+). It participates in cofactor biosynthesis; pyridoxal 5'-phosphate biosynthesis. Its function is as follows. Catalyzes the formation of pyridoxal 5'-phosphate from ribose 5-phosphate (RBP), glyceraldehyde 3-phosphate (G3P) and ammonia. The ammonia is provided by the PdxT subunit. Can also use ribulose 5-phosphate and dihydroxyacetone phosphate as substrates, resulting from enzyme-catalyzed isomerization of RBP and G3P, respectively. The sequence is that of Pyridoxal 5'-phosphate synthase subunit PdxS from Pyrobaculum arsenaticum (strain DSM 13514 / JCM 11321 / PZ6).